A 1338-amino-acid polypeptide reads, in one-letter code: Centrosomal P4.1-associated protein (1338 aa).

The tract at residues 190-211 (GLSLLPDDQSQKHRSPGNTTTG) is disordered. 2 positions are modified to phosphoserine: serine 260 and serine 316. The interval 319 to 394 (VANIEERPIK…FTNAKSKFQK (76 aa)) is alpha/beta-tubulin binding. 3 disordered regions span residues 386-414 (TNAK…PLFK), 436-479 (PILK…QTGK), and 521-551 (QGKD…ESES). Polar residues predominate over residues 400–409 (LVTNQSTSED). Serine 540 carries the phosphoserine modification. Basic and acidic residues predominate over residues 541–550 (PIRETMKESE). Serine 589 bears the Phosphoserine; by PLK2 mark. At serine 595 the chain carries Phosphoserine; by PLK2 and PLK4. Disordered stretches follow at residues 611–789 (HRMS…LSLS), 845–865 (VKRG…TSEL), and 1096–1153 (YLPM…QGEI). The span at 635-650 (NRSEDLDHTAREKESE) shows a compositional bias: basic and acidic residues. A compositionally biased stretch (polar residues) spans 679–689 (QKSTSENQTEW). A compositionally biased stretch (basic and acidic residues) spans 717–764 (STEDRERGISSREDSPQVCDDKGPFKDTRTQEDKRRDVDLDLSDKDYS). A Phosphoserine modification is found at serine 759. The interval 895-1338 (QPPGDNARSQ…EGNVLMDTEL (444 aa)) is interaction with STIL. The span at 1140–1149 (YKEEEEDQDI) shows a compositional bias: acidic residues.

Belongs to the TCP10 family. Forms homodimers. Associates with microtubules plus ends; binds to beta-tubulin subunits exposed on microtubule outer surface at its distal tip; also associates with microtubule lattice. Associated with the gamma-tubulin complex. Interacts with the head domain of EPB41. Interacts with LYST. Interacts with CEP152 (via C-terminus). Interacts with STIL. Forms a complex with STIL and SASS6. Phosphorylation at Ser-589 and Ser-595 by PLK2 is required for procentriole formation and centriole elongation. Phosphorylation by PLK2 oscillates during the cell cycle: it increases at G1/S transition and decreases during the exit from mitosis. Phosphorylation at Ser-595 is also mediated by PLK4 but is not a critical step in PLK4 function in procentriole assembly.

It is found in the cytoplasm. The protein localises to the cytoskeleton. The protein resides in the microtubule organizing center. It localises to the centrosome. Its subcellular location is the centriole. Plays an important role in cell division and centrosome function by participating in centriole duplication. Inhibits microtubule nucleation from the centrosome. Involved in the regulation of slow processive growth of centriolar microtubules. Acts as a microtubule plus-end tracking protein that stabilizes centriolar microtubules and inhibits microtubule polymerization and extension from the distal ends of centrioles. Required for centriole elongation and for STIL-mediated centriole amplification. Required for the recruitment of CEP295 to the proximal end of new-born centrioles at the centriolar microtubule wall during early S phase in a PLK4-dependent manner. May be involved in the control of centriolar-microtubule growth by acting as a regulator of tubulin release. The polypeptide is Centrosomal P4.1-associated protein (Homo sapiens (Human)).